The chain runs to 261 residues: Succinate dehydrogenase iron-sulfur subunit (261 aa).

The 2Fe-2S ferredoxin-type domain maps to 28-119 (RKVKVYRYDP…DIKIYPLPHM (92 aa)). Positions 80, 85, and 100 each coordinate [2Fe-2S] cluster. One can recognise a 4Fe-4S ferredoxin-type domain in the interval 161-191 (DREKLDGLYECILCACCSTSCPSYWWNGDKY). Positions 171, 174, and 177 each coordinate [4Fe-4S] cluster. Cys181 provides a ligand contact to [3Fe-4S] cluster. Position 186 (Trp186) interacts with a ubiquinone. 2 residues coordinate [3Fe-4S] cluster: Cys228 and Cys234. Cys238 lines the [4Fe-4S] cluster pocket.

The protein belongs to the succinate dehydrogenase/fumarate reductase iron-sulfur protein family. In terms of assembly, part of an enzyme complex containing four subunits: a flavoprotein, an iron-sulfur, cytochrome b-556, and a hydrophobic anchor protein. Requires [2Fe-2S] cluster as cofactor. [3Fe-4S] cluster serves as cofactor. The cofactor is [4Fe-4S] cluster.

The enzyme catalyses a quinone + succinate = fumarate + a quinol. The protein operates within carbohydrate metabolism; tricarboxylic acid cycle; fumarate from succinate (bacterial route): step 1/1. The protein is Succinate dehydrogenase iron-sulfur subunit (sdhB) of Rickettsia prowazekii (strain Madrid E).